Reading from the N-terminus, the 158-residue chain is uncharacterized protein (158 aa).

An N-terminal signal peptide occupies residues M1 to A22. Residues L120–A140 form a helical membrane-spanning segment.

Its subcellular location is the cell membrane. This is an uncharacterized protein from Bacillus cereus.